A 456-amino-acid chain; its full sequence is Myricetin 3-O-rhamnosyltransferase UGT77B2 (456 aa).

Catalysis depends on His-19, which acts as the Proton acceptor. Position 19 (His-19) interacts with an anthocyanidin. The Charge relay role is filled by Asp-116. Residue His-147 coordinates an anthocyanidin. UDP-beta-L-rhamnose is bound by residues Thr-279, Ala-334, His-351, Asn-355, and Glu-359. Residue Ala-374 participates in an anthocyanidin binding.

Belongs to the UDP-glycosyltransferase family. In terms of tissue distribution, expressed in young cromes.

The enzyme catalyses myricetin + UDP-beta-L-rhamnose = myricetin 3-O-alpha-L-rhamnoside + UDP + H(+). Its pathway is flavonoid metabolism. Its function is as follows. Rhamnosyltransferase involved in montbretin A (MbA) biosynthesis. Catalyzes the 3-O rhamnosylation of myricetin to produce myricetin 3-O-alpha-L-rhamnoside (MR), a precursor of MbA. MbA is a potent inhibitor of human pancreatic alpha-amylase and is being developed as drug candidate to treat type-2 diabetes. In vitro, is able to transfer UDP-glucose and UDP-xylose with 50-fold less efficiency compared with UDP-rhamnose. In vitro, can use kaempferol or quercetin as substrates, although these two flavonols may not be physiological substrates in vivo. This chain is Myricetin 3-O-rhamnosyltransferase UGT77B2, found in Crocosmia x crocosmiiflora (Montbretia).